Here is a 250-residue protein sequence, read N- to C-terminus: Triosephosphate isomerase (250 aa).

9-11 (NWK) lines the substrate pocket. Histidine 95 (electrophile) is an active-site residue. The active-site Proton acceptor is glutamate 167. Residues glycine 173, serine 213, and 234 to 235 (GG) each bind substrate.

This sequence belongs to the triosephosphate isomerase family. In terms of assembly, homodimer.

The protein resides in the cytoplasm. It carries out the reaction D-glyceraldehyde 3-phosphate = dihydroxyacetone phosphate. It participates in carbohydrate biosynthesis; gluconeogenesis. The protein operates within carbohydrate degradation; glycolysis; D-glyceraldehyde 3-phosphate from glycerone phosphate: step 1/1. In terms of biological role, involved in the gluconeogenesis. Catalyzes stereospecifically the conversion of dihydroxyacetone phosphate (DHAP) to D-glyceraldehyde-3-phosphate (G3P). The chain is Triosephosphate isomerase from Chloroflexus aurantiacus (strain ATCC 29366 / DSM 635 / J-10-fl).